A 167-amino-acid chain; its full sequence is NADH-ubiquinone oxidoreductase chain 6 (167 aa).

Helical transmembrane passes span 1–21 (MKMM…VAFA), 27–47 (VYGG…VVSL), 50–70 (VFLG…VFGY), 88–108 (VALS…LMSG), and 143–163 (WALV…LEVV).

This sequence belongs to the complex I subunit 6 family. Core subunit of respiratory chain NADH dehydrogenase (Complex I) which is composed of 45 different subunits.

It is found in the mitochondrion inner membrane. The catalysed reaction is a ubiquinone + NADH + 5 H(+)(in) = a ubiquinol + NAD(+) + 4 H(+)(out). Core subunit of the mitochondrial membrane respiratory chain NADH dehydrogenase (Complex I) which catalyzes electron transfer from NADH through the respiratory chain, using ubiquinone as an electron acceptor. Essential for the catalytic activity and assembly of complex I. This chain is NADH-ubiquinone oxidoreductase chain 6 (MT-ND6), found in Osphranter robustus (Wallaroo).